A 105-amino-acid chain; its full sequence is Large ribosomal subunit protein eL30 (105 aa).

Residues K22, K53, and K83 each participate in a glycyl lysine isopeptide (Lys-Gly) (interchain with G-Cter in ubiquitin) cross-link.

It belongs to the eukaryotic ribosomal protein eL30 family. As to quaternary structure, component of the large ribosomal subunit (LSU). Mature yeast ribosomes consist of a small (40S) and a large (60S) subunit. The 40S small subunit contains 1 molecule of ribosomal RNA (18S rRNA) and 33 different proteins (encoded by 57 genes). The large 60S subunit contains 3 rRNA molecules (25S, 5.8S and 5S rRNA) and 46 different proteins (encoded by 81 genes).

The protein resides in the cytoplasm. Functionally, component of the ribosome, a large ribonucleoprotein complex responsible for the synthesis of proteins in the cell. The small ribosomal subunit (SSU) binds messenger RNAs (mRNAs) and translates the encoded message by selecting cognate aminoacyl-transfer RNA (tRNA) molecules. The large subunit (LSU) contains the ribosomal catalytic site termed the peptidyl transferase center (PTC), which catalyzes the formation of peptide bonds, thereby polymerizing the amino acids delivered by tRNAs into a polypeptide chain. The nascent polypeptides leave the ribosome through a tunnel in the LSU and interact with protein factors that function in enzymatic processing, targeting, and the membrane insertion of nascent chains at the exit of the ribosomal tunnel. This Saccharomyces cerevisiae (strain ATCC 204508 / S288c) (Baker's yeast) protein is Large ribosomal subunit protein eL30.